The sequence spans 357 residues: Protein-glutamate methylesterase/protein-glutamine glutaminase (357 aa).

The region spanning 3–120 (RVLVVDDSAF…SLDLYKIKEQ (118 aa)) is the Response regulatory domain. D54 is subject to 4-aspartylphosphate. Residues 161–355 (PGTGRQIVCI…ASITSCVKKE (195 aa)) enclose the CheB-type methylesterase domain. Residues S173, H200, and D296 contribute to the active site.

Belongs to the CheB family. Post-translationally, phosphorylated by CheA. Phosphorylation of the N-terminal regulatory domain activates the methylesterase activity.

The protein localises to the cytoplasm. The catalysed reaction is [protein]-L-glutamate 5-O-methyl ester + H2O = L-glutamyl-[protein] + methanol + H(+). It catalyses the reaction L-glutaminyl-[protein] + H2O = L-glutamyl-[protein] + NH4(+). Functionally, involved in the modulation of the chemotaxis system; catalyzes the demethylation of specific methylglutamate residues introduced into the chemoreceptors (methyl-accepting chemotaxis proteins) by CheR. B.subtilis has an effective methylation-independent adaptation system but must utilize the methylation system for adaptation to high concentrations of attractant. The chain is Protein-glutamate methylesterase/protein-glutamine glutaminase from Bacillus subtilis (strain 168).